Reading from the N-terminus, the 122-residue chain is Large ribosomal subunit protein uL14 (122 aa).

It belongs to the universal ribosomal protein uL14 family. Part of the 50S ribosomal subunit. Forms a cluster with proteins L3 and L19. In the 70S ribosome, L14 and L19 interact and together make contacts with the 16S rRNA in bridges B5 and B8.

Functionally, binds to 23S rRNA. Forms part of two intersubunit bridges in the 70S ribosome. In Chlorobium phaeovibrioides (strain DSM 265 / 1930) (Prosthecochloris vibrioformis (strain DSM 265)), this protein is Large ribosomal subunit protein uL14.